The following is a 766-amino-acid chain: Nucleolar complex protein 2 (766 aa).

A compositionally biased stretch (basic residues) spans 1–12 (MKLATKKIKTLG). 3 disordered regions span residues 1-73 (MKLA…EELE), 100-154 (DTDD…DEED), and 674-766 (KTGV…LNEW). Over residues 14–29 (SKPDLSKKKPAKDAIR) the composition is skewed to basic and acidic residues. Polar residues predominate over residues 33-42 (PQTTSETKVT). The span at 58 to 67 (KTTKKGFKKS) shows a compositional bias: basic residues. Residues 100–115 (DTDDDDDEEGDEEDKE) show a composition bias toward acidic residues. Thr-101 carries the phosphothreonine modification. The segment covering 130-140 (EKYHKPSKDLE) has biased composition (basic and acidic residues). Positions 141-154 (VASDESDFEVDEED) are enriched in acidic residues. 5 positions are modified to phosphoserine: Ser-143, Ser-146, Ser-691, Ser-693, and Ser-705. A compositionally biased stretch (acidic residues) spans 706–720 (DDDDDEDVQEEEEVE). The segment covering 757-766 (IVKDLDLNEW) has biased composition (basic and acidic residues).

The protein belongs to the NOC2 family.

It is found in the nucleus. The chain is Nucleolar complex protein 2 from Drosophila melanogaster (Fruit fly).